The primary structure comprises 131 residues: UPF0292 protein PF1724 (131 aa).

In terms of domain architecture, Toprim spans 20–103 (KGVIIVEGKR…ETRRELQFIA (84 aa)). Residues Glu26, Asp69, and Asp71 each coordinate Mg(2+).

This sequence belongs to the UPF0292 family. Requires Mg(2+) as cofactor.

The sequence is that of UPF0292 protein PF1724 from Pyrococcus furiosus (strain ATCC 43587 / DSM 3638 / JCM 8422 / Vc1).